A 133-amino-acid polypeptide reads, in one-letter code: Small ribosomal subunit protein uS8 (133 aa).

It belongs to the universal ribosomal protein uS8 family. Part of the 30S ribosomal subunit. Contacts proteins S5 and S12.

In terms of biological role, one of the primary rRNA binding proteins, it binds directly to 16S rRNA central domain where it helps coordinate assembly of the platform of the 30S subunit. This chain is Small ribosomal subunit protein uS8, found in Protochlamydia amoebophila (strain UWE25).